Reading from the N-terminus, the 396-residue chain is 1-deoxy-D-xylulose 5-phosphate reductoisomerase (396 aa).

Positions 13, 14, 15, 16, and 127 each coordinate NADPH. A 1-deoxy-D-xylulose 5-phosphate-binding site is contributed by Lys128. An NADPH-binding site is contributed by Glu129. Asp153 contributes to the Mn(2+) binding site. Positions 154, 155, 184, and 207 each coordinate 1-deoxy-D-xylulose 5-phosphate. Residue Glu155 participates in Mn(2+) binding. NADPH is bound at residue Gly213. Residues Ser220, Asn225, Lys226, and Glu229 each contribute to the 1-deoxy-D-xylulose 5-phosphate site. Glu229 is a binding site for Mn(2+).

This sequence belongs to the DXR family. Mg(2+) is required as a cofactor. Mn(2+) serves as cofactor.

It catalyses the reaction 2-C-methyl-D-erythritol 4-phosphate + NADP(+) = 1-deoxy-D-xylulose 5-phosphate + NADPH + H(+). It participates in isoprenoid biosynthesis; isopentenyl diphosphate biosynthesis via DXP pathway; isopentenyl diphosphate from 1-deoxy-D-xylulose 5-phosphate: step 1/6. In terms of biological role, catalyzes the NADPH-dependent rearrangement and reduction of 1-deoxy-D-xylulose-5-phosphate (DXP) to 2-C-methyl-D-erythritol 4-phosphate (MEP). The polypeptide is 1-deoxy-D-xylulose 5-phosphate reductoisomerase (Pseudomonas savastanoi pv. phaseolicola (strain 1448A / Race 6) (Pseudomonas syringae pv. phaseolicola (strain 1448A / Race 6))).